The following is a 489-amino-acid chain: Poly(A) RNA polymerase GLD2 (489 aa).

Positions 93–118 (RQRFSCPSPHNQSARNSNFTSQPVTR) are disordered. Residues 100 to 116 (SPHNQSARNSNFTSQPV) show a composition bias toward polar residues. 2 residues coordinate Mg(2+): Asp219 and Asp221. The PAP-associated domain occupies 386-440 (SLGDLFLGFLRYYATVFKWDKQVISVRMARTLPKSNCKEWKDKFICVEEPFNRTN).

It belongs to the DNA polymerase type-B-like family. GLD2 subfamily. Requires Mg(2+) as cofactor. Mn(2+) serves as cofactor.

The protein localises to the cytoplasm. It carries out the reaction RNA(n) + ATP = RNA(n)-3'-adenine ribonucleotide + diphosphate. Functionally, cytoplasmic poly(A) RNA polymerase that adds successive AMP monomers to the 3'-end of specific RNAs, forming a poly(A) tail. In contrast to the canonical nuclear poly(A) RNA polymerase, it only adds poly(A) to selected cytoplasmic mRNAs. May not play a role in replication-dependent histone mRNA degradation. The sequence is that of Poly(A) RNA polymerase GLD2 from Danio rerio (Zebrafish).